The primary structure comprises 124 residues: QEGDPEAGAKAFNQCQTCHVIVDDSGTTIAGRNAKTGPNLYGVVGRTAGTQADFKGYGEGMKEAGAKGLAWDEEHFVQYVQDPTKFLKEYTGDAKAKGKMTFKLKKEADAHNIWAYLQQVAVRP.

Residue Q1 is modified to Pyrrolidone carboxylic acid. C15, C18, H19, and M100 together coordinate heme c.

Post-translationally, binds 1 heme c group covalently per subunit.

It is found in the periplasm. Its function is as follows. Cytochrome c2 is found mainly in purple, non-sulfur, photosynthetic bacteria where it functions as the electron donor to the oxidized bacteriochlorophyll in the photophosphorylation pathway. However, it may also have a role in the respiratory chain and is found in some non-photosynthetic bacteria. This is Cytochrome c2 (cycA) from Cereibacter sphaeroides (Rhodobacter sphaeroides).